A 347-amino-acid chain; its full sequence is uncharacterized protein (347 aa).

Disordered regions lie at residues 1–40, 72–92, 133–158, 173–209, and 306–347; these read MAQELAAPLSCGQPPGQNITETTTDPWDEGDLRFEPSNSM, SCEDSSSEGPSMHFVPPIQGS, SDSTTNCDLSGDNKDKHPKEKTQLTL, ENQKDDKDDDSVFPESAQEEDSQLPSSSLPGMAQVSH, and EDPR…PPDF. Over residues 15–25 the composition is skewed to polar residues; that stretch reads PGQNITETTTD. The span at 143-154 shows a compositional bias: basic and acidic residues; that stretch reads GDNKDKHPKEKT. Residues 179–194 are compositionally biased toward acidic residues; sequence KDDDSVFPESAQEEDS. A compositionally biased stretch (polar residues) spans 195–209; that stretch reads QLPSSSLPGMAQVSH. Residues 306–318 show a composition bias toward basic and acidic residues; that stretch reads EDPREANERPREL. Residues 319 to 330 show a composition bias toward basic residues; the sequence is ARKKRFSYRSKR.

This is an uncharacterized protein from Bos taurus (Bovine).